The chain runs to 767 residues: V-set and immunoglobulin domain-containing protein 10-like 2 (767 aa).

The signal sequence occupies residues 1-28 (MVGQRAQHSPVSLLLLIHLCLLHLRASG). Ig-like domains are found at residues 34 to 140 (PEAP…SHLT), 150 to 234 (PQVR…AFLD), and 242 to 324 (PVIT…TTVQ). Cystine bridges form between cysteine 56-cysteine 122, cysteine 169-cysteine 217, and cysteine 268-cysteine 308. N-linked (GlcNAc...) asparagine glycosylation is present at asparagine 376. Ig-like domains are found at residues 399 to 499 (PALA…LQLE) and 501 to 593 (PQLD…VLLE). 2 disulfide bridges follow: cysteine 435–cysteine 481 and cysteine 522–cysteine 577. The region spanning 599–699 (APPNVTISRL…EVKIPADPPF (101 aa)) is the Fibronectin type-III domain. 2 N-linked (GlcNAc...) asparagine glycosylation sites follow: asparagine 602 and asparagine 628. Residues 704–724 (AVLGAAGTGMVVATVASLLVF) form a helical membrane-spanning segment. The disordered stretch occupies residues 735-754 (PRLETPTTTPGLDPAQETTD). The span at 739–754 (TPTTTPGLDPAQETTD) shows a compositional bias: polar residues.

It is found in the membrane. This is V-set and immunoglobulin domain-containing protein 10-like 2 from Homo sapiens (Human).